A 157-amino-acid polypeptide reads, in one-letter code: SsrA-binding protein (157 aa).

The tract at residues 133–157 (LHDKRETAKERDWQRDKARLMRDKG) is disordered. Over residues 135–157 (DKRETAKERDWQRDKARLMRDKG) the composition is skewed to basic and acidic residues.

It belongs to the SmpB family.

Its subcellular location is the cytoplasm. Functionally, required for rescue of stalled ribosomes mediated by trans-translation. Binds to transfer-messenger RNA (tmRNA), required for stable association of tmRNA with ribosomes. tmRNA and SmpB together mimic tRNA shape, replacing the anticodon stem-loop with SmpB. tmRNA is encoded by the ssrA gene; the 2 termini fold to resemble tRNA(Ala) and it encodes a 'tag peptide', a short internal open reading frame. During trans-translation Ala-aminoacylated tmRNA acts like a tRNA, entering the A-site of stalled ribosomes, displacing the stalled mRNA. The ribosome then switches to translate the ORF on the tmRNA; the nascent peptide is terminated with the 'tag peptide' encoded by the tmRNA and targeted for degradation. The ribosome is freed to recommence translation, which seems to be the essential function of trans-translation. In Methylobacterium sp. (strain 4-46), this protein is SsrA-binding protein.